Here is a 157-residue protein sequence, read N- to C-terminus: 6,7-dimethyl-8-ribityllumazine synthase 1 (157 aa).

5-amino-6-(D-ribitylamino)uracil is bound by residues F22, 53 to 55 (ALE), and 82 to 84 (TVI). 87–88 (ET) is a (2S)-2-hydroxy-3-oxobutyl phosphate binding site. The Proton donor role is filled by H90. N115 lines the 5-amino-6-(D-ribitylamino)uracil pocket. H129 is a (2S)-2-hydroxy-3-oxobutyl phosphate binding site.

It belongs to the DMRL synthase family. Homopentamer.

The enzyme catalyses (2S)-2-hydroxy-3-oxobutyl phosphate + 5-amino-6-(D-ribitylamino)uracil = 6,7-dimethyl-8-(1-D-ribityl)lumazine + phosphate + 2 H2O + H(+). It functions in the pathway cofactor biosynthesis; riboflavin biosynthesis; riboflavin from 2-hydroxy-3-oxobutyl phosphate and 5-amino-6-(D-ribitylamino)uracil: step 1/2. Functionally, catalyzes the formation of 6,7-dimethyl-8-ribityllumazine by condensation of 5-amino-6-(D-ribitylamino)uracil with 3,4-dihydroxy-2-butanone 4-phosphate. This is the penultimate step in the biosynthesis of riboflavin. In Brucella abortus (strain 2308), this protein is 6,7-dimethyl-8-ribityllumazine synthase 1 (ribH1).